A 323-amino-acid polypeptide reads, in one-letter code: DNA repair and recombination protein RadA (323 aa).

ATP is bound at residue 114-121 (GEFGSGKT).

This sequence belongs to the eukaryotic RecA-like protein family.

Its function is as follows. Involved in DNA repair and in homologous recombination. Binds and assemble on single-stranded DNA to form a nucleoprotein filament. Hydrolyzes ATP in a ssDNA-dependent manner and promotes DNA strand exchange between homologous DNA molecules. This chain is DNA repair and recombination protein RadA, found in Picrophilus torridus (strain ATCC 700027 / DSM 9790 / JCM 10055 / NBRC 100828 / KAW 2/3).